The primary structure comprises 452 residues: Phosphoglucosamine mutase (452 aa).

The Phosphoserine intermediate role is filled by Ser-101. Mg(2+)-binding residues include Ser-101, Asp-241, Asp-243, and Asp-245. Ser-101 is modified (phosphoserine).

The protein belongs to the phosphohexose mutase family. It depends on Mg(2+) as a cofactor. Activated by phosphorylation.

The enzyme catalyses alpha-D-glucosamine 1-phosphate = D-glucosamine 6-phosphate. Its function is as follows. Catalyzes the conversion of glucosamine-6-phosphate to glucosamine-1-phosphate. The sequence is that of Phosphoglucosamine mutase from Lactococcus lactis subsp. lactis (strain IL1403) (Streptococcus lactis).